Here is a 380-residue protein sequence, read N- to C-terminus: Cytochrome b (380 aa).

Helical transmembrane passes span 34 to 54, 78 to 99, 114 to 134, and 179 to 199; these read FGSL…LLAM, WLIR…FLHI, WNTG…GYVL, and FFAL…IHLI. Heme b is bound by residues His-84 and His-98. Heme b contacts are provided by His-183 and His-197. His-202 contacts a ubiquinone. A run of 4 helical transmembrane segments spans residues 227 to 247, 289 to 309, 321 to 341, and 348 to 368; these read LKDI…ALFS, LGGV…PFLH, LSQT…WVGS, and FIII…ILFP.

This sequence belongs to the cytochrome b family. In terms of assembly, the cytochrome bc1 complex contains 11 subunits: 3 respiratory subunits (MT-CYB, CYC1 and UQCRFS1), 2 core proteins (UQCRC1 and UQCRC2) and 6 low-molecular weight proteins (UQCRH/QCR6, UQCRB/QCR7, UQCRQ/QCR8, UQCR10/QCR9, UQCR11/QCR10 and a cleavage product of UQCRFS1). This cytochrome bc1 complex then forms a dimer. Heme b serves as cofactor.

Its subcellular location is the mitochondrion inner membrane. Its function is as follows. Component of the ubiquinol-cytochrome c reductase complex (complex III or cytochrome b-c1 complex) that is part of the mitochondrial respiratory chain. The b-c1 complex mediates electron transfer from ubiquinol to cytochrome c. Contributes to the generation of a proton gradient across the mitochondrial membrane that is then used for ATP synthesis. This Tragopan temminckii (Temminck's tragopan) protein is Cytochrome b (MT-CYB).